Here is a 177-residue protein sequence, read N- to C-terminus: Large ribosomal subunit protein uL6 (177 aa).

This sequence belongs to the universal ribosomal protein uL6 family. As to quaternary structure, part of the 50S ribosomal subunit.

Its function is as follows. This protein binds to the 23S rRNA, and is important in its secondary structure. It is located near the subunit interface in the base of the L7/L12 stalk, and near the tRNA binding site of the peptidyltransferase center. In Actinobacillus succinogenes (strain ATCC 55618 / DSM 22257 / CCUG 43843 / 130Z), this protein is Large ribosomal subunit protein uL6.